Consider the following 871-residue polypeptide: Protein TIC 100 (871 aa).

Residues 1–85 form a disordered region; the sequence is MANEELTESQ…NANPETNIRR (85 aa). Residues 8–20 are compositionally biased toward polar residues; it reads ESQQQEDPSQQLP. Over residues 30–46 the composition is skewed to low complexity; the sequence is SDSNSDSDASSQSSGDD. 3 MORN repeats span residues 219–239, 243–257, and 337–352; these read YEGT…AENG, YEGE…GHGV, and YAGQ…CGVY. Asn-238 is modified (deamidated asparagine). Residues 587 to 647 adopt a coiled-coil conformation; that stretch reads MLDGLEKWTE…QEEEKKTEMG (61 aa). Disordered regions lie at residues 631–654 and 669–721; these read EELK…EDED and KEKI…NSPF. Positions 632-645 are enriched in basic and acidic residues; it reads ELKKKEQEEEKKTE. Thr-649 carries the post-translational modification Phosphothreonine. Residues 669–683 show a composition bias toward basic and acidic residues; it reads KEKIQENKQEEKYKD. The span at 684–704 shows a compositional bias: acidic residues; the sequence is DDDEDDDDGDDDDDDDDDDDL.

As to quaternary structure, part of the Tic complex. Component of the 1-MD complex, composed of TIC20-I, TIC214, TIC100 and TIC56. Interacts with the translocating preproteins. Hydrolysis of ATP is essential for the formation of this complex. The 1-MD complex interacts with TIC21. In terms of tissue distribution, preferentially expressed in ovules, and moderately expressed in leaves and siliques.

The protein localises to the plastid. It is found in the chloroplast inner membrane. Involved in protein precursor import into chloroplasts. May be part of an intermediate translocation complex acting as a protein-conducting channel at the inner envelope. Plays an important role during embryogenesis and chloroplast biogenesis. The polypeptide is Protein TIC 100 (Arabidopsis thaliana (Mouse-ear cress)).